Here is a 381-residue protein sequence, read N- to C-terminus: Ribosome assembly 1 protein (381 aa).

Met-1 bears the N-acetylmethionine mark. 3 disordered regions span residues 1–38 (MNYN…IKRQ), 164–216 (KDTF…DRDE), and 350–381 (FGSS…TRNK). A Phosphoserine modification is found at Ser-172. Residues 359–371 (NHYKPNYKNRKPN) show a composition bias toward basic residues.

The protein resides in the nucleus. Functionally, involved in a late nucleoplasmic step of 60S ribosomal subunit assembly. The chain is Ribosome assembly 1 protein (RSA1) from Saccharomyces cerevisiae (strain ATCC 204508 / S288c) (Baker's yeast).